The primary structure comprises 514 residues: MLNDRIAVTCFQTLLKKSNVKHEMEQTNNYIVNNLADINRNTFPALAGSVRIDFNSDYYISGGQIVVSPKDSNAYVKLLIVYLKYCYINYSAKTKYPPQSLLAVLDYDSFKAKWVKYLDKSLTDYLDDNKTEGCSFTEQQVVEKYPQVDSLVAKILYRVCNSLGKLLDLKDFENKNISGFEINTAQDSPTVADDNESNDFFRECVNDQRYYSSLSGSKLGKAKLEANAYIFKILLKSASGEFDIDRLSRNPLAISKFMNLYTNHVTDSETFKSKFEALKSIKTPFASFIKKAFGIRLNFEDSKIFYALPKERQSDVLSDDMMVESIVRDAASFTVVSDNNYLPERVDRFVTQLLLELFPKTKASFPNKIMFGFLHYFALSTTNSKRFNDTQESTIEIEGETLKISLKFITSYLRNAIQSQHPDYADSNIVRLWCNKRSNLALGYFKSRNIQLYLYSKYPRLLNYMRFDYFKGLDMGKLTDEERLSIQTLRCITEDRSEGTLATHNDLNSWILRP.

The protein resides in the virion. This chain is Protein p59, found in Lettuce infectious yellows virus (isolate United States/92) (LIYV).